Consider the following 380-residue polypeptide: Probable protein phosphatase 2C 63 (380 aa).

A PPM-type phosphatase domain is found at 35–338 (DYSIAVVQAN…DDISVIVVYL (304 aa)). Residues Asp66, Gly67, Asp270, and Asp329 each coordinate Mn(2+).

Belongs to the PP2C family. Requires Mg(2+) as cofactor. Mn(2+) is required as a cofactor.

It carries out the reaction O-phospho-L-seryl-[protein] + H2O = L-seryl-[protein] + phosphate. It catalyses the reaction O-phospho-L-threonyl-[protein] + H2O = L-threonyl-[protein] + phosphate. Functionally, may dephosphorylate and repress plasma membrane H(+)-ATPases (PM H(+)-ATPases, e.g. AHA1 and AHA2), thus influencing negatively plant growth and fitness. This chain is Probable protein phosphatase 2C 63, found in Arabidopsis thaliana (Mouse-ear cress).